The following is a 306-amino-acid chain: uncharacterized protein (306 aa).

The Cytoplasmic portion of the chain corresponds to 1–6; the sequence is MRFRQL. The chain crosses the membrane as a helical span at residues 7-27; it reads LPLFGALFALYIIWGSTYFVI. The EamA 1 domain maps to 18 to 141; that stretch reads IIWGSTYFVI…GLAGIIMLNS (124 aa). The Periplasmic portion of the chain corresponds to 28-36; that stretch reads RIGVESWPP. The helical transmembrane segment at 37–57 threads the bilayer; sequence LMMAGVRFLAAGILLLAFLLL. The Cytoplasmic segment spans residues 58–67; sequence RGHKLPPLRP. The helical transmembrane segment at 68-88 threads the bilayer; that stretch reads LLNAALIGLLLLAVGNGMVTV. Residues 89–93 are Periplasmic-facing; it reads AEHQN. The helical transmembrane segment at 94 to 114 threads the bilayer; it reads VPSGIAAVVVATVPLFTLCFS. Residues 115–125 are Cytoplasmic-facing; sequence RLFGIKTRKLE. A helical transmembrane segment spans residues 126–146; that stretch reads WVGIAIGLAGIIMLNSGGNLS. Residues 147 to 148 lie on the Periplasmic side of the membrane; the sequence is GN. Residues 149–169 traverse the membrane as a helical segment; it reads PWGAILILIGSISWAFGSVYG. The EamA 2 domain occupies 160-285; the sequence is ISWAFGSVYG…IVFAVVLVTL (126 aa). The Cytoplasmic segment spans residues 170-173; sequence SRIT. A helical transmembrane segment spans residues 174–194; sequence LPVGMMAGAIEMLAAGVVLMI. Residues 195-206 lie on the Periplasmic side of the membrane; the sequence is ASMIAGEKLTAL. Residues 207–227 traverse the membrane as a helical segment; sequence PSLSGFLAVGYLALFGSIIAI. At 228-239 the chain is on the cytoplasmic side; it reads NAYMYLIRNVSP. The helical transmembrane segment at 240-260 threads the bilayer; the sequence is ALATSYAYVNPVVAVLLGTGL. Residues 261–269 are Periplasmic-facing; sequence GGETLSKIE. Residues 270–290 form a helical membrane-spanning segment; it reads WLALGVIVFAVVLVTLGKYLF. Residues 291 to 306 lie on the Cytoplasmic side of the membrane; it reads PAKPVVAPVIQDASSE.

Belongs to the EamA transporter family.

The protein resides in the cell inner membrane. This is an uncharacterized protein from Escherichia coli O157:H7.